Reading from the N-terminus, the 1028-residue chain is Unconventional myosin-Ic-A (1028 aa).

An N-acetylmethionine modification is found at methionine 1. One can recognise a Myosin motor domain in the interval 12-696; that stretch reads GVQDFVLLEN…TLFATEDALE (685 aa). Residue 105-112 coordinates ATP; it reads GESGSGKT. At lysine 348 the chain carries N6-methyllysine. Residues 573 to 595 are actin-binding; the sequence is LSKLMEILMSKEPSYVRCIKPND. 2 consecutive IQ domains span residues 699–728 and 722–751; these read KQGIATFLQARWKGYVQRRNFLHMKHSAIN and MKHSAINIQSWWRGNIGRKKAAKKRWAVDV. The TH1 domain maps to 850-1024; the sequence is KDNYPQSVPR…NGHLSVVAPR (175 aa).

The protein belongs to the TRAFAC class myosin-kinesin ATPase superfamily. Myosin family. Interacts (via its IQ motifs) with calmodulin.

Its subcellular location is the cytoplasm. The protein localises to the cell membrane. It localises to the cell projection. It is found in the stereocilium membrane. In terms of biological role, myosins are actin-based motor molecules with ATPase activity. Unconventional myosins serve in intracellular movements. Their highly divergent tails are presumed to bind to membranous compartments, which would be moved relative to actin filaments. Involved in egg activation by coupling dynamic actin to membrane. The chain is Unconventional myosin-Ic-A (myo1c-a) from Xenopus laevis (African clawed frog).